A 225-amino-acid chain; its full sequence is MMTNLFSTFDPSTNLFNLSLNWTSTFLGLLLIPSMFWLMPSRINILWNKMNLNLHNEFKTLLGKNSFQGSTLILISIFIMMLFNNFMGLFPYIFTSTSHMTLTFSIALPMWMSFMLFGWINNTNHMFTHLVPQGTPNALMSFMVLIETISNVIRPGTLAVRLAANMIAGHLLLTLLGNTGPSLTTSIMLFLIIGQMLLLILESAVAMIQAYVFSILSTLYSSEVY.

6 helical membrane passes run 18-38 (LSLNWTSTFLGLLLIPSMFWL), 73-93 (ILISIFIMMLFNNFMGLFPYI), 100-120 (MTLTFSIALPMWMSFMLFGWI), 126-146 (MFTHLVPQGTPNALMSFMVLI), 156-176 (GTLAVRLAANMIAGHLLLTLL), and 187-207 (IMLFLIIGQMLLLILESAVAM).

Belongs to the ATPase A chain family. F-type ATPases have 2 components, CF(1) - the catalytic core - and CF(0) - the membrane proton channel. CF(1) has five subunits: alpha(3), beta(3), gamma(1), delta(1), epsilon(1). CF(0) has three main subunits: a, b and c.

The protein resides in the mitochondrion inner membrane. In terms of biological role, mitochondrial membrane ATP synthase (F(1)F(0) ATP synthase or Complex V) produces ATP from ADP in the presence of a proton gradient across the membrane which is generated by electron transport complexes of the respiratory chain. F-type ATPases consist of two structural domains, F(1) - containing the extramembraneous catalytic core and F(0) - containing the membrane proton channel, linked together by a central stalk and a peripheral stalk. During catalysis, ATP synthesis in the catalytic domain of F(1) is coupled via a rotary mechanism of the central stalk subunits to proton translocation. Key component of the proton channel; it may play a direct role in the translocation of protons across the membrane. This chain is ATP synthase subunit a (ATP6), found in Locusta migratoria (Migratory locust).